The sequence spans 170 residues: Flavin reductase (170 aa).

Residues serine 51, histidine 138, and 159–162 each bind NAD(+); that span reads FYRG.

The protein belongs to the non-flavoprotein flavin reductase family. Homodimer. Likely forms a loose transient complex with monooxygenases for which it provides FMNH(2).

It catalyses the reaction FMNH2 + NAD(+) = FMN + NADH + 2 H(+). The catalysed reaction is FADH2 + NAD(+) = FAD + NADH + 2 H(+). Its function is as follows. Catalyzes the reduction of FMN, and to a lesser extent, FAD, using NADH as an electron donor. Is able to provide the FMNH(2) required for the Baeyer-Villiger oxidations catalyzed by 2,5-diketocamphane monooxygenases and 3,6-diketocamphane monooxygenase. NADPH acts as a very poor cosubstrate. This is Flavin reductase from Pseudomonas putida (Arthrobacter siderocapsulatus).